The sequence spans 498 residues: ATP synthase subunit beta, chloroplastic (498 aa).

Thr6 carries the post-translational modification Phosphothreonine. A Phosphoserine modification is found at Ser13. 172 to 179 (GGAGVGKT) lines the ATP pocket.

This sequence belongs to the ATPase alpha/beta chains family. As to quaternary structure, F-type ATPases have 2 components, CF(1) - the catalytic core - and CF(0) - the membrane proton channel. CF(1) has five subunits: alpha(3), beta(3), gamma(1), delta(1), epsilon(1). CF(0) has four main subunits: a(1), b(1), b'(1) and c(9-12).

It is found in the plastid. It localises to the chloroplast thylakoid membrane. It catalyses the reaction ATP + H2O + 4 H(+)(in) = ADP + phosphate + 5 H(+)(out). In terms of biological role, produces ATP from ADP in the presence of a proton gradient across the membrane. The catalytic sites are hosted primarily by the beta subunits. This Brassica napus (Rape) protein is ATP synthase subunit beta, chloroplastic.